The sequence spans 259 residues: Ribosome maturation factor RimP (259 aa).

Residues 198 to 259 (SLGLAPEPPP…RGEIDTSEGD (62 aa)) form a disordered region. Basic and acidic residues predominate over residues 243–253 (LAADKARRGEI).

The protein belongs to the RimP family.

The protein localises to the cytoplasm. Required for maturation of 30S ribosomal subunits. The polypeptide is Ribosome maturation factor RimP (Rhodopseudomonas palustris (strain TIE-1)).